A 302-amino-acid chain; its full sequence is Ribostamycin:4-(gamma-L-glutamylamino)-(S)-2-hydroxybutanoyl-[BtrI acyl-carrier protein] 4-(gamma-L-glutamylamino)-(S)-2-hydroxybutanoate transferase (302 aa).

The catalysed reaction is 4-(gamma-L-glutamylamino)-(2S)-2-hydroxybutanoyl-[BtrI ACP] + ribostamycin = gamma-L-glutamyl-butirosin B + holo-[BtrI ACP] + H(+). Its pathway is antibiotic biosynthesis; butirosin biosynthesis. Its function is as follows. Aminoglycoside acyltransferase that attaches the (S)-4-amino-2-hydroxybutyrate (AHBA) side chain from the acyl carrier protein BtrI to the aminoglycoside ribostamycin in the biosynthetic pathway of butirosin. The AHBA side chain protects the antibiotic from several common resistance mechanisms. This Niallia circulans (Bacillus circulans) protein is Ribostamycin:4-(gamma-L-glutamylamino)-(S)-2-hydroxybutanoyl-[BtrI acyl-carrier protein] 4-(gamma-L-glutamylamino)-(S)-2-hydroxybutanoate transferase (btrH).